The chain runs to 243 residues: NAD-dependent protein deacetylase (243 aa).

The Deacetylase sirtuin-type domain occupies 1-243 (MRNDLETLKH…VSVVKSLMTE (243 aa)). NAD(+)-binding residues include alanine 24, phenylalanine 35, arginine 36, glutamine 105, isoleucine 107, aspartate 108, and histidine 123. A nicotinamide-binding site is contributed by phenylalanine 35. The nicotinamide site is built by isoleucine 107 and aspartate 108. Catalysis depends on histidine 123, which acts as the Proton acceptor. The Zn(2+) site is built by cysteine 131, cysteine 134, cysteine 151, and cysteine 154. Positions 192, 193, 215, and 232 each coordinate NAD(+).

It belongs to the sirtuin family. Class U subfamily. The cofactor is Zn(2+).

It localises to the cytoplasm. It catalyses the reaction N(6)-acetyl-L-lysyl-[protein] + NAD(+) + H2O = 2''-O-acetyl-ADP-D-ribose + nicotinamide + L-lysyl-[protein]. NAD-dependent protein deacetylase which modulates the activities of several enzymes which are inactive in their acetylated form. This Staphylococcus aureus (strain Mu50 / ATCC 700699) protein is NAD-dependent protein deacetylase.